Here is a 180-residue protein sequence, read N- to C-terminus: Der GTPase-activating protein YihI (180 aa).

Disordered regions lie at residues M1–R88 and P147–E180. Basic and acidic residues-rich tracts occupy residues F18–S33, E50–L67, V77–R88, and A153–E163. The segment covering D164–D173 has biased composition (acidic residues).

The protein belongs to the YihI family. Interacts with Der.

A GTPase-activating protein (GAP) that modifies Der/EngA GTPase function. May play a role in ribosome biogenesis. The protein is Der GTPase-activating protein YihI of Photobacterium profundum (strain SS9).